Consider the following 22-residue polypeptide: 2.39 kDa venom peptide (22 aa).

In terms of processing, contains 2 disulfide bonds. Expressed by the venom gland.

It is found in the secreted. Not lethal to mice by intraperitoneal or intracerebroventricular injections in doses up to 100 micrograms. This is 2.39 kDa venom peptide from Heterometrus spinifer (Asia giant forest scorpion).